We begin with the raw amino-acid sequence, 870 residues long: DNA polymerase kappa (870 aa).

The 256-residue stretch at 103-358 folds into the UmuC domain; that stretch reads IVHIDMDAFY…LPIRKVSGIG (256 aa). Mg(2+) contacts are provided by D107, D198, and E199. UBZ4-type zinc fingers lie at residues 621-651 and 776-806; these read ILTC…DGPS and ALVC…NKSF. Positions 624, 627, 642, 646, 779, 782, 797, and 801 each coordinate Zn(2+). The segment at 816–858 is disordered; it reads NPVNQPKESSRSTGSSSGVQKAVTRTKRPGLMTKYSTSKKIKP.

This sequence belongs to the DNA polymerase type-Y family. Interacts with REV1. Interacts with PCNA. The cofactor is Mg(2+). It depends on Mn(2+) as a cofactor. In terms of tissue distribution, detected at low levels in testis, spleen, prostate and ovary. Detected at very low levels in kidney, colon, brain, heart, liver, lung, placenta, pancreas and peripheral blood leukocytes.

The protein localises to the nucleus. It carries out the reaction DNA(n) + a 2'-deoxyribonucleoside 5'-triphosphate = DNA(n+1) + diphosphate. Functionally, DNA polymerase specifically involved in DNA repair. Plays an important role in translesion synthesis, where the normal high-fidelity DNA polymerases cannot proceed and DNA synthesis stalls. Depending on the context, it inserts the correct base, but causes frequent base transitions, transversions and frameshifts. Lacks 3'-5' proofreading exonuclease activity. Forms a Schiff base with 5'-deoxyribose phosphate at abasic sites, but does not have lyase activity. The chain is DNA polymerase kappa (POLK) from Homo sapiens (Human).